The following is a 150-amino-acid chain: uncharacterized protein (150 aa).

This is an uncharacterized protein from Homo sapiens (Human).